The primary structure comprises 239 residues: Sensory rhodopsin-1 (239 aa).

At 1 to 3 the chain is on the extracellular side; that stretch reads MDA. Residues 4–25 form a helical membrane-spanning segment; it reads VATAYLGGAVALIVGVAFVWLL. Over 26–34 the chain is Cytoplasmic; the sequence is YRSLDGSPH. A helical transmembrane segment spans residues 35 to 56; that stretch reads QSALAPLAIIPVFAGLSYVGMA. Topologically, residues 57–70 are extracellular; that stretch reads YDIGTVIVNGNQIV. Residues 71–92 traverse the membrane as a helical segment; it reads GLRYIDWLVTTPILVGYVGYAA. The Cytoplasmic segment spans residues 93–95; the sequence is GAS. The chain crosses the membrane as a helical span at residues 96–118; it reads RRSIIGVMVADALMIAVGAGAVV. Over 119 to 122 the chain is Extracellular; that stretch reads TDGT. A helical transmembrane segment spans residues 123–150; the sequence is LKWALFGVSSIFHLSLFAYLYVIFPRVV. Over 151-153 the chain is Cytoplasmic; it reads PDV. A helical membrane pass occupies residues 154–181; it reads PEQIGLFNLLKNHIGLLWLAYPLVWLFG. At 182-189 the chain is on the extracellular side; the sequence is PAGIGEAT. Residues 190 to 222 form a helical membrane-spanning segment; that stretch reads AAGVALTYVFLDVLAKVPYVYFFYARRRVFMHS. Lys-205 is subject to N6-(retinylidene)lysine. Topologically, residues 223–239 are cytoplasmic; sequence ESPPAPEQATVEATAAD.

The protein belongs to the archaeal/bacterial/fungal opsin family. As to quaternary structure, interacts with HTR-I.

It localises to the cell membrane. Its function is as follows. Involved in the control of phototaxis. Mediates both photoattractant (in the orange light) and photophobic (in the near UV light) responses. The signal is then transmitted to the sensory rhodopsin I transducer (HTR-I). The polypeptide is Sensory rhodopsin-1 (sopI) (Halobacterium salinarum (strain ATCC 29341 / DSM 671 / R1)).